Here is a 571-residue protein sequence, read N- to C-terminus: L-erythrulose 1-kinase (571 aa).

The DhaK domain maps to 7–331; the sequence is SPDDFADEAV…WTAPVETPAY (325 aa). The active-site Tele-hemiaminal-histidine intermediate is the H217. A DhaL domain is found at 367–567; the sequence is RNIVAVLETF…FAMLMKALGE (201 aa). ATP contacts are provided by residues 396–402, 442–443, G484, R539, and 552–554; these read DGDHGQG, TS, and DPG.

The catalysed reaction is L-erythrulose + ATP = L-erythrulose 1-phosphate + ADP + H(+). The protein operates within carbohydrate metabolism; L-threitol degradation. In terms of biological role, kinase that has a preference for L-erythrulose, producing L-erythrulose-1P. Involved in the degradation pathway of L-threitol, that allows M.smegmatis to grow on this compound as the sole carbon source. Is also able to phosphorylate D-erythrulose and dihydroxyacetone in vitro. The protein is L-erythrulose 1-kinase of Mycolicibacterium smegmatis (strain ATCC 700084 / mc(2)155) (Mycobacterium smegmatis).